The following is a 132-amino-acid chain: D-ribose pyranase (132 aa).

The Proton donor role is filled by His-20. Residues Asp-28, His-99, and 121–123 (YSN) contribute to the substrate site.

It belongs to the RbsD / FucU family. RbsD subfamily. In terms of assembly, homodecamer.

It is found in the cytoplasm. It carries out the reaction beta-D-ribopyranose = beta-D-ribofuranose. It functions in the pathway carbohydrate metabolism; D-ribose degradation; D-ribose 5-phosphate from beta-D-ribopyranose: step 1/2. Its function is as follows. Catalyzes the interconversion of beta-pyran and beta-furan forms of D-ribose. This chain is D-ribose pyranase, found in Lactococcus lactis subsp. cremoris (strain MG1363).